We begin with the raw amino-acid sequence, 385 residues long: Glucose-fructose oxidoreductase domain-containing protein 2 (385 aa).

Residues 1-25 form the signal peptide; it reads MKMLPGVGVFGTGSSARVLVPLLRA.

The protein belongs to the Gfo/Idh/MocA family.

It is found in the secreted. The protein resides in the extracellular space. Its subcellular location is the extracellular matrix. Functionally, promotes matrix assembly. The protein is Glucose-fructose oxidoreductase domain-containing protein 2 (GFOD2) of Homo sapiens (Human).